The primary structure comprises 320 residues: Cytochrome f (320 aa).

Positions 1-35 (MQNRNTFSWVKEQMTRFISVSIMIYVITRTSIANA) are cleaved as a signal peptide. 4 residues coordinate heme: Y36, C56, C59, and H60. A helical transmembrane segment spans residues 286 to 306 (VQGLLFFLASVILAQIFLVLK).

Belongs to the cytochrome f family. In terms of assembly, the 4 large subunits of the cytochrome b6-f complex are cytochrome b6, subunit IV (17 kDa polypeptide, petD), cytochrome f and the Rieske protein, while the 4 small subunits are PetG, PetL, PetM and PetN. The complex functions as a dimer. Requires heme as cofactor.

It localises to the plastid. The protein localises to the chloroplast thylakoid membrane. Functionally, component of the cytochrome b6-f complex, which mediates electron transfer between photosystem II (PSII) and photosystem I (PSI), cyclic electron flow around PSI, and state transitions. In Acorus calamus (Sweet flag), this protein is Cytochrome f.